The following is a 245-amino-acid chain: MNNYKLTIQYDGARFKGWQRLGNNDNTIQGKIESVISEMVGKETEIIGCSRTDAGVHALNQVANFQSDEKLVEHKVKKYLNQYLPNDISITNVEEVHNRFHARYNSKVKTYLYKIWNEEHTNPFMRKYSMHVNKKLNVKSMKEAAKHLVGSHDFTAFSNAKSKKKSMVREVYSLEVMEEAGFVQIRVSGNGFLHNMVRKIVGALIEVGLGQLAAEAIPQILEAKQRNQINCLAEASGLYLENVEF.

The active-site Nucleophile is Asp53. Tyr111 contributes to the substrate binding site.

This sequence belongs to the tRNA pseudouridine synthase TruA family. As to quaternary structure, homodimer.

It catalyses the reaction uridine(38/39/40) in tRNA = pseudouridine(38/39/40) in tRNA. Its function is as follows. Formation of pseudouridine at positions 38, 39 and 40 in the anticodon stem and loop of transfer RNAs. The sequence is that of tRNA pseudouridine synthase A 2 from Bacillus thuringiensis subsp. konkukian (strain 97-27).